The following is a 236-amino-acid chain: Small ribosomal subunit protein eS6 (236 aa).

It belongs to the eukaryotic ribosomal protein eS6 family. As to quaternary structure, component of the small ribosomal subunit. Mature ribosomes consist of a small (40S) and a large (60S) subunit. The 40S subunit contains about 32 different proteins and 1 molecule of RNA (18S). The 60S subunit contains 45 different proteins and 3 molecules of RNA (25S, 5.8S and 5S).

It localises to the cytoplasm. Component of the ribosome, a large ribonucleoprotein complex responsible for the synthesis of proteins in the cell. The small ribosomal subunit (SSU) binds messenger RNAs (mRNAs) and translates the encoded message by selecting cognate aminoacyl-transfer RNA (tRNA) molecules. The large subunit (LSU) contains the ribosomal catalytic site termed the peptidyl transferase center (PTC), which catalyzes the formation of peptide bonds, thereby polymerizing the amino acids delivered by tRNAs into a polypeptide chain. The nascent polypeptides leave the ribosome through a tunnel in the LSU and interact with protein factors that function in enzymatic processing, targeting, and the membrane insertion of nascent chains at the exit of the ribosomal tunnel. RPS6A is involved in nucleolar processing of pre-18S ribosomal RNA and ribosome assembly. This Candida albicans (strain SC5314 / ATCC MYA-2876) (Yeast) protein is Small ribosomal subunit protein eS6 (RPS6A).